Reading from the N-terminus, the 269-residue chain is Xyloglucan endotransglucosylase/hydrolase protein 24 (269 aa).

Positions 1–21 (MSPFKIFFFTTLLVAAFSVSA) are cleaved as a signal peptide. The GH16 domain maps to 22-212 (ADFNTDVNVA…WSKAPFMASY (191 aa)). Glu98 serves as the catalytic Nucleophile. Residue Glu102 is the Proton donor of the active site. Residue Glu102 coordinates xyloglucan. N-linked (GlcNAc...) asparagine glycosylation is present at Asn106. Residues 115–117 (HTN), 125–127 (DKE), 191–192 (DW), Gly196, and Arg256 contribute to the xyloglucan site. The cysteines at positions 251 and 265 are disulfide-linked.

The protein belongs to the glycosyl hydrolase 16 family. XTH group 2 subfamily. In terms of processing, contains at least one intrachain disulfide bond essential for its enzymatic activity. Post-translationally, N-glycosylated; essential for its enzymatic activity. As to expression, highly expressed. Predominantly expressed in stems. Expressed in shoot apical meristems, also found in seedlings and meristems.

The protein localises to the secreted. Its subcellular location is the cell wall. It localises to the extracellular space. It is found in the apoplast. The enzyme catalyses breaks a beta-(1-&gt;4) bond in the backbone of a xyloglucan and transfers the xyloglucanyl segment on to O-4 of the non-reducing terminal glucose residue of an acceptor, which can be a xyloglucan or an oligosaccharide of xyloglucan.. Its function is as follows. Catalyzes xyloglucan endohydrolysis (XEH) and/or endotransglycosylation (XET). Cleaves and religates xyloglucan polymers, an essential constituent of the primary cell wall, and thereby participates in cell wall construction of growing tissues. May be required during development to modify the walls of cells under mechanical stress. The chain is Xyloglucan endotransglucosylase/hydrolase protein 24 (XTH24) from Arabidopsis thaliana (Mouse-ear cress).